The primary structure comprises 491 residues: MTSATTVKTEYEAIIGLETHCQLSTNTKIFSSSSTAFGADPNTNIDPVCMGLPGVLPVLNEKVLEYAVKAGLALNCQIAKYSKFDRKQYFYPDLPKNYQISQYDLPIAEHGWLEIELLDAEGNPKRKRIGITRLHMEEDAGKLVHAGSDRISGSTYSLVDYNRAGVPLVEIVSEPDIRTGQEAAEYAQELRRVMRYLGVSDGNMQEGSLRCDVNISVRPVGQEKFGTKVEIKNMNSFSAIQKAIEHEIERQIEAIESGEKIIQETRLWEEGSQRTISMRTKEGSSDYRYFPEPDLAPIEVSEAQLSQWRGELPELPAQKRHRYESELGLSAYDTRVLTEDVTVSQYFEAAIASGANPKAAANWITQDIAAYLNKQKLSIAEIGLTPANLADVITRIETGKISNAQAKQKLPELLTGLSPEKAFAGQELISDLSVLEPIVDEVIAANPKELEKYRNGNINLKGFFVGQVLKKTNKRADPKLTNELVEKKLNG.

It belongs to the GatB/GatE family. GatB subfamily. Heterotrimer of A, B and C subunits.

The enzyme catalyses L-glutamyl-tRNA(Gln) + L-glutamine + ATP + H2O = L-glutaminyl-tRNA(Gln) + L-glutamate + ADP + phosphate + H(+). The catalysed reaction is L-aspartyl-tRNA(Asn) + L-glutamine + ATP + H2O = L-asparaginyl-tRNA(Asn) + L-glutamate + ADP + phosphate + 2 H(+). Its function is as follows. Allows the formation of correctly charged Asn-tRNA(Asn) or Gln-tRNA(Gln) through the transamidation of misacylated Asp-tRNA(Asn) or Glu-tRNA(Gln) in organisms which lack either or both of asparaginyl-tRNA or glutaminyl-tRNA synthetases. The reaction takes place in the presence of glutamine and ATP through an activated phospho-Asp-tRNA(Asn) or phospho-Glu-tRNA(Gln). This is Aspartyl/glutamyl-tRNA(Asn/Gln) amidotransferase subunit B from Trichormus variabilis (strain ATCC 29413 / PCC 7937) (Anabaena variabilis).